The chain runs to 256 residues: Hydroxyacylglutathione hydrolase (256 aa).

Positions 57, 59, 61, 62, 115, 134, and 172 each coordinate Zn(2+).

This sequence belongs to the metallo-beta-lactamase superfamily. Glyoxalase II family. In terms of assembly, monomer. Requires Zn(2+) as cofactor.

It carries out the reaction an S-(2-hydroxyacyl)glutathione + H2O = a 2-hydroxy carboxylate + glutathione + H(+). The protein operates within secondary metabolite metabolism; methylglyoxal degradation; (R)-lactate from methylglyoxal: step 2/2. Functionally, thiolesterase that catalyzes the hydrolysis of S-D-lactoyl-glutathione to form glutathione and D-lactic acid. This chain is Hydroxyacylglutathione hydrolase, found in Rhizobium etli (strain ATCC 51251 / DSM 11541 / JCM 21823 / NBRC 15573 / CFN 42).